The following is a 436-amino-acid chain: Serine--tRNA ligase (436 aa).

Residues 43-55 are compositionally biased toward basic and acidic residues; that stretch reads TKSEQLKQKRNEV. Residues 43–69 form a disordered region; it reads TKSEQLKQKRNEVSDQIAQAKRNKEDA. 237-239 contacts L-serine; the sequence is TAE. ATP is bound at residue 268–270; the sequence is RSE. L-serine is bound at residue E291. 355–358 contacts ATP; sequence EISS. S390 contacts L-serine.

Belongs to the class-II aminoacyl-tRNA synthetase family. Type-1 seryl-tRNA synthetase subfamily. In terms of assembly, homodimer. The tRNA molecule binds across the dimer.

The protein localises to the cytoplasm. The catalysed reaction is tRNA(Ser) + L-serine + ATP = L-seryl-tRNA(Ser) + AMP + diphosphate + H(+). It catalyses the reaction tRNA(Sec) + L-serine + ATP = L-seryl-tRNA(Sec) + AMP + diphosphate + H(+). It participates in aminoacyl-tRNA biosynthesis; selenocysteinyl-tRNA(Sec) biosynthesis; L-seryl-tRNA(Sec) from L-serine and tRNA(Sec): step 1/1. Functionally, catalyzes the attachment of serine to tRNA(Ser). Is also able to aminoacylate tRNA(Sec) with serine, to form the misacylated tRNA L-seryl-tRNA(Sec), which will be further converted into selenocysteinyl-tRNA(Sec). This is Serine--tRNA ligase from Lactobacillus gasseri (strain ATCC 33323 / DSM 20243 / BCRC 14619 / CIP 102991 / JCM 1131 / KCTC 3163 / NCIMB 11718 / NCTC 13722 / AM63).